A 259-amino-acid chain; its full sequence is Global transcriptional regulator CodY (259 aa).

The interval 1 to 155 (MTLLEKTRKI…GGTVVGMEIL (155 aa)) is GAF domain. Positions 203–222 (ASKIADRVGITRSVIVNALR) form a DNA-binding region, H-T-H motif.

It belongs to the CodY family.

The protein localises to the cytoplasm. Functionally, DNA-binding global transcriptional regulator which is involved in the adaptive response to starvation and acts by directly or indirectly controlling the expression of numerous genes in response to nutrient availability. During rapid exponential growth, CodY is highly active and represses genes whose products allow adaptation to nutrient depletion. The protein is Global transcriptional regulator CodY of Listeria welshimeri serovar 6b (strain ATCC 35897 / DSM 20650 / CCUG 15529 / CIP 8149 / NCTC 11857 / SLCC 5334 / V8).